The following is a 686-amino-acid chain: Glycogenin (686 aa).

Residues L13, N16, Y19, and R82 each contribute to the UDP site. The UDP-alpha-D-glucose site is built by L13, N16, Y19, R82, K91, D107, A108, D109, N139, T140, D166, D169, and Q170. Positions 107, 108, and 109 each coordinate UDP. Mn(2+) is bound at residue D107. D109 lines the Mn(2+) pocket. O-linked (Glc...) tyrosine glycosylation is found at Y196 and Y198. UDP contacts are provided by H213, G216, and K219. H213 provides a ligand contact to Mn(2+). The UDP-alpha-D-glucose site is built by G216 and K219. Disordered stretches follow at residues 264–331 (VKGE…ANFP), 381–444 (PEPT…RGNA), 460–533 (KHRR…GVPA), and 603–686 (KPLR…VLET). Composition is skewed to low complexity over residues 285–308 (SSQS…YTSH) and 398–416 (SAAS…ASPT). Residues 307-686 (SHGASWDASR…TEEERDVLET (380 aa)) are not required for catalytic activity. Composition is skewed to polar residues over residues 424–442 (VTPT…TTRG) and 471–483 (AATS…GRAQ). Residues 677–686 (TEEERDVLET) are compositionally biased toward acidic residues.

The protein belongs to the glycosyltransferase 8 family. Glycogenin subfamily. In terms of assembly, interacts with glycogen synthase gsy-1; the interaction is direct. Requires Mn(2+) as cofactor.

Its subcellular location is the cytoplasm. It localises to the vacuole. The catalysed reaction is L-tyrosyl-[glycogenin] + UDP-alpha-D-glucose = alpha-D-glucosyl-L-tyrosyl-[glycogenin] + UDP + H(+). The enzyme catalyses [1,4-alpha-D-glucosyl](n)-L-tyrosyl-[glycogenin] + UDP-alpha-D-glucose = [1,4-alpha-D-glucosyl](n+1)-L-tyrosyl-[glycogenin] + UDP + H(+). Functionally, self-glucosylating initiator of glycogen synthesis. It catalyzes the formation of a short alpha (1,4)-glucosyl chain covalently attached via a glucose 1-O-tyrosyl linkage to internal tyrosine residues and these chains act as primers for the elongation reaction catalyzed by glycogen synthase. The sequence is that of Glycogenin from Neurospora crassa (strain ATCC 24698 / 74-OR23-1A / CBS 708.71 / DSM 1257 / FGSC 987).